We begin with the raw amino-acid sequence, 234 residues long: Ribose-5-phosphate isomerase A (234 aa).

Substrate contacts are provided by residues 28–31 (TGST), 85–88 (DGAD), and 98–101 (KGLG). The Proton acceptor role is filled by glutamate 107. Substrate is bound at residue lysine 125.

Belongs to the ribose 5-phosphate isomerase family. In terms of assembly, homodimer.

The enzyme catalyses aldehydo-D-ribose 5-phosphate = D-ribulose 5-phosphate. It participates in carbohydrate degradation; pentose phosphate pathway; D-ribose 5-phosphate from D-ribulose 5-phosphate (non-oxidative stage): step 1/1. Functionally, catalyzes the reversible conversion of ribose-5-phosphate to ribulose 5-phosphate. The protein is Ribose-5-phosphate isomerase A of Roseiflexus castenholzii (strain DSM 13941 / HLO8).